Here is a 245-residue protein sequence, read N- to C-terminus: UPF0246 protein CE1889 (245 aa).

A disordered region spans residues M1–L20.

The protein belongs to the UPF0246 family.

The chain is UPF0246 protein CE1889 from Corynebacterium efficiens (strain DSM 44549 / YS-314 / AJ 12310 / JCM 11189 / NBRC 100395).